We begin with the raw amino-acid sequence, 778 residues long: Probable protein kinase DDB_G0291133 (778 aa).

The tract at residues 129–162 is disordered; it reads LSINNNNNNNNNNGGYKIPSSVNKNSNNYNSNSN. Positions 177 to 462 constitute a Protein kinase domain; sequence FDVVCKLGSG…LDQILLNENI (286 aa). ATP is bound by residues 183–191 and lysine 206; that span reads LGSGSFSDV. Catalysis depends on aspartate 303, which acts as the Proton acceptor. Mg(2+) contacts are provided by asparagine 308 and aspartate 321. Disordered stretches follow at residues 478 to 509, 562 to 697, and 757 to 778; these read NIEN…DDNN, HFVR…GFYG, and SHPQ…QETN. A compositionally biased stretch (acidic residues) spans 578–590; it reads SDEEEDDDDDDDS. Over residues 599–651 the composition is skewed to low complexity; sequence SLNNLNNSSSNIGISESNSNNSFSSILEENNESSSSSPLPSLSFSRRLSTSSL. Polar residues predominate over residues 652–670; the sequence is VTTISPKPNFNTSGNKLFS. Residues 671–693 are compositionally biased toward low complexity; that stretch reads NENNNSNNNNNNNNNNQNNNNNN. Residues 757-766 show a composition bias toward basic and acidic residues; sequence SHPQESDKMS.

It belongs to the protein kinase superfamily. Ser/Thr protein kinase family. WEE1 subfamily.

The catalysed reaction is L-seryl-[protein] + ATP = O-phospho-L-seryl-[protein] + ADP + H(+). It catalyses the reaction L-threonyl-[protein] + ATP = O-phospho-L-threonyl-[protein] + ADP + H(+). The protein is Probable protein kinase DDB_G0291133 of Dictyostelium discoideum (Social amoeba).